A 147-amino-acid chain; its full sequence is MVHLTGEEKAAVTGLWGKVNVEEVGGEALGRLLVVYPWTQRFFDSFGDLSNAGAVMGNAKVKAHGKKVLNSFGEGLKNLDNLKGTFAKLSELHCDKLHVDPENFRLLGNVLVVVLARHFGKDFTPPVQAAFQKLAQGVATALAHKYH.

Val2 bears the N-acetylvaline mark. Residues 3-147 (HLTGEEKAAV…VATALAHKYH (145 aa)) enclose the Globin domain. Lys18 is modified (N6-succinyllysine). Ser45 is modified (phosphoserine). Residue Lys60 is modified to N6-succinyllysine. Heme b-binding residues include His64 and His93. Arg105 bears the Asymmetric dimethylarginine mark. Thr124 bears the Phosphothreonine mark.

It belongs to the globin family. Hb1 is a heterotetramer of two alpha chains and two beta-1 chains. In terms of tissue distribution, red blood cells.

Its function is as follows. Involved in oxygen transport from the lung to the various peripheral tissues. The sequence is that of Hemoglobin subunit beta-1 (HBB1) from Chalinolobus morio (Chocolate-wattled bat).